We begin with the raw amino-acid sequence, 1017 residues long: Protein HIR2 (1017 aa).

WD repeat units lie at residues 10–49 (YHNG…ELSK), 74–117 (CHKS…QLFP), 124–163 (SEVN…FQEL), 167–208 (CHEK…DDTS), 228–271 (PLNV…TNIE), 275–326 (GHDF…PITV), and 330–371 (AVQG…YTFS). The segment at 417 to 561 (ISTTTSSSNT…APSDLPRSNS (145 aa)) is disordered. Residues 473–483 (LDDDIDGDGDD) show a composition bias toward acidic residues. 2 stretches are compositionally biased toward polar residues: residues 518 to 535 (SDST…VTTK) and 545 to 561 (LISS…RSNS).

The protein belongs to the WD repeat HIR1 family.

The protein localises to the nucleus. Required for replication-independent chromatin assembly and for the periodic repression of histone gene transcription during the cell cycle. The chain is Protein HIR2 (HIR2) from Candida albicans (strain SC5314 / ATCC MYA-2876) (Yeast).